A 225-amino-acid chain; its full sequence is Orotate phosphoribosyltransferase (225 aa).

A 5-phospho-alpha-D-ribose 1-diphosphate-binding site is contributed by lysine 31. 39–40 provides a ligand contact to orotate; sequence FF. Residues 78-79, arginine 105, lysine 106, lysine 109, histidine 111, and 130-138 contribute to the 5-phospho-alpha-D-ribose 1-diphosphate site; these read YK and DDVLTSGKA. Threonine 134 and arginine 163 together coordinate orotate.

The protein belongs to the purine/pyrimidine phosphoribosyltransferase family. PyrE subfamily. In terms of assembly, homodimer.

It carries out the reaction orotidine 5'-phosphate + diphosphate = orotate + 5-phospho-alpha-D-ribose 1-diphosphate. It functions in the pathway pyrimidine metabolism; UMP biosynthesis via de novo pathway; UMP from orotate: step 1/2. Its function is as follows. Catalyzes the transfer of a ribosyl phosphate group from 5-phosphoribose 1-diphosphate to orotate, leading to the formation of orotidine monophosphate (OMP). This chain is Orotate phosphoribosyltransferase (URA5), found in Cryptococcus neoformans var. neoformans serotype D (strain B-3501A) (Filobasidiella neoformans).